The sequence spans 84 residues: Exodeoxyribonuclease 7 small subunit (84 aa).

A disordered region spans residues 65–84 (QEGDWTTSPFEPASGEPPGG).

The protein belongs to the XseB family. Heterooligomer composed of large and small subunits.

It is found in the cytoplasm. The catalysed reaction is Exonucleolytic cleavage in either 5'- to 3'- or 3'- to 5'-direction to yield nucleoside 5'-phosphates.. In terms of biological role, bidirectionally degrades single-stranded DNA into large acid-insoluble oligonucleotides, which are then degraded further into small acid-soluble oligonucleotides. The sequence is that of Exodeoxyribonuclease 7 small subunit from Syntrophobacter fumaroxidans (strain DSM 10017 / MPOB).